The primary structure comprises 156 residues: Large ribosomal subunit protein uL15 (156 aa).

Basic and acidic residues predominate over residues 1-11 (MKLNDLRDKPG). A disordered region spans residues 1-44 (MKLNDLRDKPGSVKARKRVGRGIGSGTGKTGGRGVKGQKSRSGV). The segment covering 21-35 (RGIGSGTGKTGGRGV) has biased composition (gly residues).

This sequence belongs to the universal ribosomal protein uL15 family. As to quaternary structure, part of the 50S ribosomal subunit.

In terms of biological role, binds to the 23S rRNA. This is Large ribosomal subunit protein uL15 from Brucella abortus (strain S19).